The primary structure comprises 325 residues: Adenine deaminase (325 aa).

Residues histidine 8, histidine 10, and histidine 186 each contribute to the Zn(2+) site. Glutamate 189 functions as the Proton donor in the catalytic mechanism. Zn(2+) is bound at residue aspartate 267. Residue aspartate 268 participates in substrate binding.

It belongs to the metallo-dependent hydrolases superfamily. Adenosine and AMP deaminases family. Adenine deaminase type 2 subfamily. The cofactor is Zn(2+).

It carries out the reaction adenine + H2O + H(+) = hypoxanthine + NH4(+). Its function is as follows. Catalyzes the hydrolytic deamination of adenine to hypoxanthine. Plays an important role in the purine salvage pathway and in nitrogen catabolism. The protein is Adenine deaminase of Chelativorans sp. (strain BNC1).